The sequence spans 357 residues: Actin, macronuclear (357 aa).

Belongs to the actin family. In terms of processing, met-1 may be removed after translation.

The protein resides in the cytoplasm. The protein localises to the cytoskeleton. The catalysed reaction is ATP + H2O = ADP + phosphate + H(+). Its function is as follows. Actins are highly conserved proteins that are involved in various types of cell motility and are ubiquitously expressed in all eukaryotic cells. The chain is Actin, macronuclear from Oxytricha fallax.